A 231-amino-acid polypeptide reads, in one-letter code: Large ribosomal subunit protein uL1 (231 aa).

This sequence belongs to the universal ribosomal protein uL1 family. In terms of assembly, part of the 50S ribosomal subunit.

Its function is as follows. Binds directly to 23S rRNA. The L1 stalk is quite mobile in the ribosome, and is involved in E site tRNA release. Protein L1 is also a translational repressor protein, it controls the translation of the L11 operon by binding to its mRNA. This Saccharophagus degradans (strain 2-40 / ATCC 43961 / DSM 17024) protein is Large ribosomal subunit protein uL1.